Consider the following 336-residue polypeptide: Holliday junction branch migration complex subunit RuvB (336 aa).

Residues 1–182 are large ATPase domain (RuvB-L); sequence MKERIVNLET…FGMSFRMQFY (182 aa). ATP contacts are provided by residues Leu-21, Arg-22, Gly-63, Lys-66, Thr-67, Ser-68, 129–131, Arg-172, Tyr-182, and Arg-219; that span reads EDF. Thr-67 is a binding site for Mg(2+). Residues 183-253 form a small ATPAse domain (RuvB-S) region; it reads SPSELALIIK…ITLHALNELG (71 aa). A head domain (RuvB-H) region spans residues 256-336; it reads ELGFDEADLA…IPTLKSQTLF (81 aa). DNA contacts are provided by Arg-310 and Arg-315.

This sequence belongs to the RuvB family. In terms of assembly, homohexamer. Forms an RuvA(8)-RuvB(12)-Holliday junction (HJ) complex. HJ DNA is sandwiched between 2 RuvA tetramers; dsDNA enters through RuvA and exits via RuvB. An RuvB hexamer assembles on each DNA strand where it exits the tetramer. Each RuvB hexamer is contacted by two RuvA subunits (via domain III) on 2 adjacent RuvB subunits; this complex drives branch migration. In the full resolvosome a probable DNA-RuvA(4)-RuvB(12)-RuvC(2) complex forms which resolves the HJ.

It is found in the cytoplasm. It catalyses the reaction ATP + H2O = ADP + phosphate + H(+). In terms of biological role, the RuvA-RuvB-RuvC complex processes Holliday junction (HJ) DNA during genetic recombination and DNA repair, while the RuvA-RuvB complex plays an important role in the rescue of blocked DNA replication forks via replication fork reversal (RFR). RuvA specifically binds to HJ cruciform DNA, conferring on it an open structure. The RuvB hexamer acts as an ATP-dependent pump, pulling dsDNA into and through the RuvAB complex. RuvB forms 2 homohexamers on either side of HJ DNA bound by 1 or 2 RuvA tetramers; 4 subunits per hexamer contact DNA at a time. Coordinated motions by a converter formed by DNA-disengaged RuvB subunits stimulates ATP hydrolysis and nucleotide exchange. Immobilization of the converter enables RuvB to convert the ATP-contained energy into a lever motion, pulling 2 nucleotides of DNA out of the RuvA tetramer per ATP hydrolyzed, thus driving DNA branch migration. The RuvB motors rotate together with the DNA substrate, which together with the progressing nucleotide cycle form the mechanistic basis for DNA recombination by continuous HJ branch migration. Branch migration allows RuvC to scan DNA until it finds its consensus sequence, where it cleaves and resolves cruciform DNA. This Helicobacter pylori (strain HPAG1) protein is Holliday junction branch migration complex subunit RuvB.